A 215-amino-acid polypeptide reads, in one-letter code: ATP phosphoribosyltransferase (215 aa).

Belongs to the ATP phosphoribosyltransferase family. Short subfamily. As to quaternary structure, heteromultimer composed of HisG and HisZ subunits.

Its subcellular location is the cytoplasm. The enzyme catalyses 1-(5-phospho-beta-D-ribosyl)-ATP + diphosphate = 5-phospho-alpha-D-ribose 1-diphosphate + ATP. It functions in the pathway amino-acid biosynthesis; L-histidine biosynthesis; L-histidine from 5-phospho-alpha-D-ribose 1-diphosphate: step 1/9. Catalyzes the condensation of ATP and 5-phosphoribose 1-diphosphate to form N'-(5'-phosphoribosyl)-ATP (PR-ATP). Has a crucial role in the pathway because the rate of histidine biosynthesis seems to be controlled primarily by regulation of HisG enzymatic activity. This Clostridium acetobutylicum (strain ATCC 824 / DSM 792 / JCM 1419 / IAM 19013 / LMG 5710 / NBRC 13948 / NRRL B-527 / VKM B-1787 / 2291 / W) protein is ATP phosphoribosyltransferase (hisG).